A 219-amino-acid polypeptide reads, in one-letter code: MASSSSLRSTSCLASAAETDADNLCLRLGPPGSSITTTTTTGGADPAAKRSLGAKRSLESTDSMASGTGTSAAGDEHDDDTAAPAKAQVVGWPPVRAYRRNTFHQAAAAAAATKKGGDEKQKQQQQGGGLYVKVSMDGAPYLRKVDLKMCKGYRELREALDLLFTKCFSATASDGCSDGQFAIAYEDKDGDLMLVGDVPWEMFISSCKKLRIMKGSEAR.

The EAR-like (transcriptional repression) signature appears at Leu24–Leu28. Disordered regions lie at residues Leu24–Gln88 and Ala109–Gly128. Polar residues predominate over residues Ser60 to Ser71. Positions Gly129 to Gly215 constitute a PB1 domain.

Belongs to the Aux/IAA family. Homodimers and heterodimers. In terms of tissue distribution, highly expressed in flowers. Expressed in seedlings.

Its subcellular location is the nucleus. Aux/IAA proteins are short-lived transcriptional factors that function as repressors of early auxin response genes at low auxin concentrations. The chain is Auxin-responsive protein IAA24 (IAA24) from Oryza sativa subsp. japonica (Rice).